A 344-amino-acid chain; its full sequence is Tetraacyldisaccharide 4'-kinase (344 aa).

Residue 65 to 72 coordinates ATP; sequence HAGGTGKT.

It belongs to the LpxK family.

It carries out the reaction a lipid A disaccharide + ATP = a lipid IVA + ADP + H(+). It functions in the pathway glycolipid biosynthesis; lipid IV(A) biosynthesis; lipid IV(A) from (3R)-3-hydroxytetradecanoyl-[acyl-carrier-protein] and UDP-N-acetyl-alpha-D-glucosamine: step 6/6. Functionally, transfers the gamma-phosphate of ATP to the 4'-position of a tetraacyldisaccharide 1-phosphate intermediate (termed DS-1-P) to form tetraacyldisaccharide 1,4'-bis-phosphate (lipid IVA). The protein is Tetraacyldisaccharide 4'-kinase of Neisseria meningitidis serogroup A / serotype 4A (strain DSM 15465 / Z2491).